We begin with the raw amino-acid sequence, 1591 residues long: GATOR1 complex protein DEPDC5 (1591 aa).

3 disordered regions span residues 427–455 (GKKS…TLPI), 478–532 (LATC…STNI), and 695–720 (LSNS…STSP). The span at 430-439 (SASEKTKNGR) shows a compositional bias: basic and acidic residues. A compositionally biased stretch (low complexity) spans 494-508 (SASSCDVSSSPSLPS). The residue at position 505 (Ser505) is a Phosphoserine. The segment covering 518 to 532 (SQASDDSSLGKSTNI) has biased composition (polar residues). Phosphoserine is present on Ser992. Disordered stretches follow at residues 1040 to 1064 (SQKS…ENSS) and 1118 to 1153 (STGQ…SSQQ). The span at 1118–1149 (STGQPMDRGNNQTFGNSQNIEQAFPSANSGDY) shows a compositional bias: polar residues. In terms of domain architecture, DEP spans 1175–1250 (PSTGVQLLSE…YGFYFYKIVM (76 aa)). Residue Ser1518 is modified to Phosphoserine.

It belongs to the IML1 family. In terms of assembly, within the GATOR complex, component of the GATOR1 subcomplex, made of DEPDC5, NPRL2 and NPRL3. GATOR1 mediates the strong interaction of the GATOR complex with small GTPases Rag (RagA/RRAGA, RagB/RRAGB, RagC/RRAGC and/or RagD/RRAGD) heterodimers. GATOR1 interacts with GPR155/LYCHOS; interaction takes place in presence of cholesterol and prevents interaction between GATOR1 and KICSTOR. Interacts with SAMTOR; interaction is direct and takes place in presence of methionine, leading to inhibit the activity of the GATOR1 complex. In terms of processing, phosphorylation at Ser-992 and Ser-1518 by AKT1 and PIM1 inhibit the activity of DEPDC5, releasing inhibition of the mTORC1 pathway. Post-translationally, ubiquitinated. Amino acid-induced 'Lys-48'-linked polyubiquitination of DEPDC5 by the BCR(KLHL22) ubiquitin ligase complex leads to DEPDC5 proteasomal degradation and inhibition of the GATOR1 complex. Ubiquitination may occur at multiple lysines. Expressed at low levels in all brain regions. Expressed throughout brain development, including in midgestation embryonic head (11.5 dpc), neonatal brain and whole adult brain. Present in neurons and absent in non-neuronal cells, including astrocytes (at protein level).

Its subcellular location is the lysosome membrane. The protein localises to the cytoplasm. It localises to the cytosol. The protein resides in the perinuclear region. As a component of the GATOR1 complex functions as an inhibitor of the amino acid-sensing branch of the mTORC1 pathway. In response to amino acid depletion, the GATOR1 complex has GTPase activating protein (GAP) activity and strongly increases GTP hydrolysis by RagA/RRAGA (or RagB/RRAGB) within heterodimeric Rag complexes, thereby turning them into their inactive GDP-bound form, releasing mTORC1 from lysosomal surface and inhibiting mTORC1 signaling. In the presence of abundant amino acids, the GATOR1 complex is negatively regulated by GATOR2, the other GATOR subcomplex, in this amino acid-sensing branch of the TORC1 pathway. Within the GATOR1 complex, DEPDC5 mediates direct interaction with the nucleotide-binding pocket of small GTPases Rag (RagA/RRAGA, RagB/RRAGB, RagC/RRAGC and/or RagD/RRAGD) and coordinates their nucleotide loading states by promoting RagA/RRAGA or RagB/RRAGB into their GDP-binding state and RagC/RRAGC or RagD/RRAGD into their GTP-binding state. However, it does not execute the GAP activity, which is mediated by NPRL2. This is GATOR1 complex protein DEPDC5 from Mus musculus (Mouse).